Here is a 401-residue protein sequence, read N- to C-terminus: Multidrug resistance protein MdtA (401 aa).

Residues Met1 to Ala20 form the signal peptide.

Belongs to the membrane fusion protein (MFP) (TC 8.A.1) family. Part of a tripartite efflux system composed of MdtA, MdtB and MdtC.

Its subcellular location is the cell inner membrane. This is Multidrug resistance protein MdtA from Photorhabdus laumondii subsp. laumondii (strain DSM 15139 / CIP 105565 / TT01) (Photorhabdus luminescens subsp. laumondii).